Here is a 290-residue protein sequence, read N- to C-terminus: Cbb3-type cytochrome c oxidase subunit CcoP (290 aa).

Residues 1-22 (MSVKPTKQKPGEPPTTGHSWDG) are disordered. Topologically, residues 1–37 (MSVKPTKQKPGEPPTTGHSWDGIEEFDNPMPRWWLWT) are cytoplasmic. Residues 38 to 58 (FYVTIVWAIGYSILYPAWPLI) form a helical membrane-spanning segment. The Periplasmic segment spans residues 59 to 290 (NGATNGLIGH…VYVHGLGGGE (232 aa)). Cytochrome c domains are found at residues 109 to 199 (YATN…LQIS) and 206 to 287 (ALSA…HGLG). 8 residues coordinate heme c: C122, C125, H126, M174, C219, C222, H223, and M264.

The protein belongs to the CcoP / FixP family. In terms of assembly, component of the cbb3-type cytochrome c oxidase at least composed of CcoN, CcoO, CcoQ and CcoP. Requires heme c as cofactor.

It is found in the cell inner membrane. Its pathway is energy metabolism; oxidative phosphorylation. Functionally, C-type cytochrome. Part of the cbb3-type cytochrome c oxidase complex. CcoP subunit is required for transferring electrons from donor cytochrome c via its heme groups to CcoO subunit. From there, electrons are shuttled to the catalytic binuclear center of CcoN subunit where oxygen reduction takes place. The complex also functions as a proton pump. This chain is Cbb3-type cytochrome c oxidase subunit CcoP, found in Cereibacter sphaeroides (strain ATCC 17023 / DSM 158 / JCM 6121 / CCUG 31486 / LMG 2827 / NBRC 12203 / NCIMB 8253 / ATH 2.4.1.) (Rhodobacter sphaeroides).